Consider the following 516-residue polypeptide: Nondiscriminating glutamyl-tRNA synthetase EARS2, mitochondrial (516 aa).

The transit peptide at 1–39 (MRPAFIRGKWLSRTLELATGLGRRTCSSRESGREVRVRF) directs the protein to the mitochondrion. An L-glutamate-binding site is contributed by 38–40 (RFA). A 'HIGH' region motif is present at residues 43–51 (PTGFLHLGG). ATP is bound at residue histidine 48. L-glutamate is bound by residues glutamate 74, 226 to 230 (YHLAN), and arginine 244. ATP is bound by residues glutamate 247 and 282 to 286 (KLSKR). The short motif at 282 to 286 (KLSKR) is the 'KMSKS' region element.

It belongs to the class-I aminoacyl-tRNA synthetase family. Glutamate--tRNA ligase type 1 subfamily.

It is found in the mitochondrion matrix. The enzyme catalyses tRNA(Glx) + L-glutamate + ATP = L-glutamyl-tRNA(Glx) + AMP + diphosphate. It carries out the reaction tRNA(Glu) + L-glutamate + ATP = L-glutamyl-tRNA(Glu) + AMP + diphosphate. It catalyses the reaction tRNA(Gln) + L-glutamate + ATP = L-glutamyl-tRNA(Gln) + AMP + diphosphate. In terms of biological role, non-discriminating glutamyl-tRNA synthetase that catalyzes aminoacylation of both mitochondrial tRNA(Glu) and tRNA(Gln) and participates in RNA aminoacylation for mitochondrial protein translation. Attachs glutamate to tRNA(Glu) or tRNA(Gln) in a two-step reaction: glutamate is first activated by ATP to form Glu-AMP and then transferred to the acceptor end of tRNA(Glu) or tRNA(Gln). The polypeptide is Nondiscriminating glutamyl-tRNA synthetase EARS2, mitochondrial (Xenopus tropicalis (Western clawed frog)).